A 379-amino-acid chain; its full sequence is Chaperone protein DnaJ (379 aa).

One can recognise a J domain in the interval 5 to 70; that stretch reads DYYEVLGVGK…EKKAAYDQYG (66 aa). The segment at 139 to 217 adopts a CR-type zinc-finger fold; the sequence is GHEAQIRVPH…CHGQGKLKSQ (79 aa). 8 residues coordinate Zn(2+): cysteine 152, cysteine 155, cysteine 169, cysteine 172, cysteine 191, cysteine 194, cysteine 205, and cysteine 208. CXXCXGXG motif repeat units follow at residues 152-159, 169-176, 191-198, and 205-212; these read CEHCHGNG, CPTCNGVG, CPKCHGSG, and CTKCHGQG.

This sequence belongs to the DnaJ family. In terms of assembly, homodimer. Zn(2+) is required as a cofactor.

It is found in the cytoplasm. Functionally, participates actively in the response to hyperosmotic and heat shock by preventing the aggregation of stress-denatured proteins and by disaggregating proteins, also in an autonomous, DnaK-independent fashion. Unfolded proteins bind initially to DnaJ; upon interaction with the DnaJ-bound protein, DnaK hydrolyzes its bound ATP, resulting in the formation of a stable complex. GrpE releases ADP from DnaK; ATP binding to DnaK triggers the release of the substrate protein, thus completing the reaction cycle. Several rounds of ATP-dependent interactions between DnaJ, DnaK and GrpE are required for fully efficient folding. Also involved, together with DnaK and GrpE, in the DNA replication of plasmids through activation of initiation proteins. The sequence is that of Chaperone protein DnaJ from Cupriavidus metallidurans (strain ATCC 43123 / DSM 2839 / NBRC 102507 / CH34) (Ralstonia metallidurans).